Here is a 173-residue protein sequence, read N- to C-terminus: Transmembrane protein 240 (173 aa).

A run of 2 helical transmembrane segments spans residues 5–25 (ANTM…ACLM) and 90–110 (LMLG…MDGV). Residue Ser-169 is modified to Phosphoserine.

It is found in the synapse. Its subcellular location is the cell membrane. The protein is Transmembrane protein 240 (Tmem240) of Mus musculus (Mouse).